Here is a 165-residue protein sequence, read N- to C-terminus: 2-C-methyl-D-erythritol 2,4-cyclodiphosphate synthase (165 aa).

A divalent metal cation-binding residues include Asp9 and His11. 4-CDP-2-C-methyl-D-erythritol 2-phosphate contacts are provided by residues 9–11 (DVH) and 35–36 (HS). His43 provides a ligand contact to a divalent metal cation. 4-CDP-2-C-methyl-D-erythritol 2-phosphate contacts are provided by residues 57-59 (DIG), 101-107 (AQAPKML), 133-136 (TTTE), Phe140, and Arg143.

The protein belongs to the IspF family. As to quaternary structure, homotrimer. Requires a divalent metal cation as cofactor.

It catalyses the reaction 4-CDP-2-C-methyl-D-erythritol 2-phosphate = 2-C-methyl-D-erythritol 2,4-cyclic diphosphate + CMP. The protein operates within isoprenoid biosynthesis; isopentenyl diphosphate biosynthesis via DXP pathway; isopentenyl diphosphate from 1-deoxy-D-xylulose 5-phosphate: step 4/6. Involved in the biosynthesis of isopentenyl diphosphate (IPP) and dimethylallyl diphosphate (DMAPP), two major building blocks of isoprenoid compounds. Catalyzes the conversion of 4-diphosphocytidyl-2-C-methyl-D-erythritol 2-phosphate (CDP-ME2P) to 2-C-methyl-D-erythritol 2,4-cyclodiphosphate (ME-CPP) with a corresponding release of cytidine 5-monophosphate (CMP). The sequence is that of 2-C-methyl-D-erythritol 2,4-cyclodiphosphate synthase from Pseudoalteromonas translucida (strain TAC 125).